Reading from the N-terminus, the 645-residue chain is Translation factor GUF1, mitochondrial (645 aa).

The tr-type G domain occupies 44–228; that stretch reads ENYRNFSIVA…AIIDRIPPPT (185 aa). GTP is bound by residues 53–60, 120–124, and 174–177; these read AHVDHGKS, DTPGH, and NKID.

The protein belongs to the TRAFAC class translation factor GTPase superfamily. Classic translation factor GTPase family. LepA subfamily.

It localises to the mitochondrion inner membrane. The catalysed reaction is GTP + H2O = GDP + phosphate + H(+). Its function is as follows. Promotes mitochondrial protein synthesis. May act as a fidelity factor of the translation reaction, by catalyzing a one-codon backward translocation of tRNAs on improperly translocated ribosomes. Binds to mitochondrial ribosomes in a GTP-dependent manner. The polypeptide is Translation factor GUF1, mitochondrial (Saccharomyces cerevisiae (strain ATCC 204508 / S288c) (Baker's yeast)).